Consider the following 1508-residue polypeptide: Calponin homology domain-containing protein DDB_G0272472 (1508 aa).

Disordered stretches follow at residues 1 to 165 (MFRN…KNDF), 197 to 290 (DSEE…NLSP), 309 to 518 (DFKS…TSIV), 531 to 561 (AANATTTNNDNNNNNNNTSSPTNKSTNLFND), 680 to 706 (KEKQDQLEKQRKLEQQRLQKEKDEKEL), and 1036 to 1391 (KIEK…KKSA). Residues 81 to 107 (SSSPSTSTTTTTKSSSTTTTTTTSSSS) show a composition bias toward low complexity. Basic and acidic residues predominate over residues 208-222 (PIKKKQSNDLEKNIF). Low complexity-rich tracts occupy residues 234-251 (KQSTVTKPKQPQQQQKQP), 263-290 (FGDSSLSLDSPLLASKSSPPKSSVNLSP), and 315-332 (SNNTTTVKKAVPISKSKP). 2 stretches are compositionally biased toward basic and acidic residues: residues 337 to 346 (QKEEIKEVST) and 362 to 371 (VDEKPKERST). Residues 380-391 (KTVTVKSNNSFE) are compositionally biased toward polar residues. Low complexity predominate over residues 395-438 (FGSTTTNDDGGDNDFSFTPATTPSSSSSTKATTTSPSSTTTTKS). Over residues 439–452 (NINIGQKSNKSVDQ) the composition is skewed to polar residues. Residues 455 to 498 (QFLNDIFQQEEQDKKRREEEAKLKQQQKQKEKEQIKDEIDDLFK) are a coiled coil. The span at 465 to 498 (EQDKKRREEEAKLKQQQKQKEKEQIKDEIDDLFK) shows a compositional bias: basic and acidic residues. Low complexity-rich tracts occupy residues 500–516 (SKPTTTTTSTPSKSTTS) and 531–557 (AANATTTNNDNNNNNNNTSSPTNKSTN). The span at 1036-1164 (KIEKEKEERD…DQEEKEKQLK (129 aa)) shows a compositional bias: basic and acidic residues. Composition is skewed to low complexity over residues 1165-1181 (EQQQQQKVIIPTTTTTT) and 1189-1206 (DSDALLNLPDSASSSSHS). The span at 1216-1225 (SKAKGRKKPT) shows a compositional bias: basic residues. Residues 1226-1235 (RRELTKDGNR) show a composition bias toward basic and acidic residues. Positions 1333–1355 (PTVTQTTTTTTTPPTTPPSSSVQ) are enriched in low complexity. A compositionally biased stretch (polar residues) spans 1362–1374 (RSFSGSSFMGINS). Residues 1397-1504 (MKALDVLLQW…YLSEFFKVMK (108 aa)) form the Calponin-homology (CH) domain.

The polypeptide is Calponin homology domain-containing protein DDB_G0272472 (Dictyostelium discoideum (Social amoeba)).